The following is a 277-amino-acid chain: Elongation factor Ts (277 aa).

The tract at residues 79–82 is involved in Mg(2+) ion dislocation from EF-Tu; that stretch reads TDFV.

It belongs to the EF-Ts family.

It is found in the cytoplasm. Its function is as follows. Associates with the EF-Tu.GDP complex and induces the exchange of GDP to GTP. It remains bound to the aminoacyl-tRNA.EF-Tu.GTP complex up to the GTP hydrolysis stage on the ribosome. In Phytoplasma australiense, this protein is Elongation factor Ts.